The sequence spans 180 residues: Large ribosomal subunit protein uL6 (180 aa).

It belongs to the universal ribosomal protein uL6 family. As to quaternary structure, part of the 50S ribosomal subunit.

Functionally, this protein binds to the 23S rRNA, and is important in its secondary structure. It is located near the subunit interface in the base of the L7/L12 stalk, and near the tRNA binding site of the peptidyltransferase center. This chain is Large ribosomal subunit protein uL6, found in Cutibacterium acnes (strain DSM 16379 / KPA171202) (Propionibacterium acnes).